Here is a 194-residue protein sequence, read N- to C-terminus: Ion-translocating oxidoreductase complex subunit A (194 aa).

6 helical membrane-spanning segments follow: residues 4–24 (LALI…QFLG), 39–59 (IGLS…SHIL), 72–92 (LRTI…EMLV), 102–122 (VLGI…VALL), 135–155 (TTQG…FAAL), and 172–192 (AIGM…SGLV).

It belongs to the NqrDE/RnfAE family. The complex is composed of six subunits: RnfA, RnfB, RnfC, RnfD, RnfE and RnfG.

It is found in the cell inner membrane. Functionally, part of a membrane-bound complex that couples electron transfer with translocation of ions across the membrane. The chain is Ion-translocating oxidoreductase complex subunit A from Pseudomonas aeruginosa (strain LESB58).